The chain runs to 404 residues: Tryptophan synthase beta chain (404 aa).

Lysine 98 bears the N6-(pyridoxal phosphate)lysine mark.

This sequence belongs to the TrpB family. In terms of assembly, tetramer of two alpha and two beta chains. Requires pyridoxal 5'-phosphate as cofactor.

It catalyses the reaction (1S,2R)-1-C-(indol-3-yl)glycerol 3-phosphate + L-serine = D-glyceraldehyde 3-phosphate + L-tryptophan + H2O. It participates in amino-acid biosynthesis; L-tryptophan biosynthesis; L-tryptophan from chorismate: step 5/5. Functionally, the beta subunit is responsible for the synthesis of L-tryptophan from indole and L-serine. In Rhodopseudomonas palustris (strain BisB5), this protein is Tryptophan synthase beta chain.